Consider the following 67-residue polypeptide: Sodium channel neurotoxin MeuNaTxalpha-10 (67 aa).

Residues 2–66 enclose the LCN-type CS-alpha/beta domain; that stretch reads RDGYIAKPHN…VPIRIPGKCH (65 aa). Intrachain disulfides connect Cys12–Cys65, Cys16–Cys38, Cys24–Cys48, and Cys28–Cys50. Position 67 (Arg67) is a propeptide, removed by a carboxypeptidase.

It belongs to the long (4 C-C) scorpion toxin superfamily. Sodium channel inhibitor family. Alpha subfamily. In terms of tissue distribution, expressed by the venom gland.

The protein localises to the secreted. Alpha toxins bind voltage-independently at site-3 of sodium channels (Nav) and inhibit the inactivation of the activated channels, thereby blocking neuronal transmission. This Mesobuthus eupeus (Lesser Asian scorpion) protein is Sodium channel neurotoxin MeuNaTxalpha-10.